The primary structure comprises 900 residues: Minor teichoic acid biosynthesis protein GgaB (900 aa).

The protein belongs to the glycosyltransferase 2 family.

The protein operates within cell wall biogenesis; poly(glucopyranosyl N-acetylgalactosamine 1-phosphate) teichoic acid biosynthesis. Involved in the biosynthesis of galactosamine-containing minor teichoic acid, a non-essential cell wall polymer in B.subtilis 168. In Bacillus subtilis (strain 168), this protein is Minor teichoic acid biosynthesis protein GgaB (ggaB).